Reading from the N-terminus, the 146-residue chain is 3-dehydroquinate dehydratase (146 aa).

Y24 (proton acceptor) is an active-site residue. 3 residues coordinate substrate: N73, H79, and D86. The active-site Proton donor is H99. Substrate contacts are provided by residues 100–101 (LS) and R110.

This sequence belongs to the type-II 3-dehydroquinase family. In terms of assembly, homododecamer.

It carries out the reaction 3-dehydroquinate = 3-dehydroshikimate + H2O. The protein operates within metabolic intermediate biosynthesis; chorismate biosynthesis; chorismate from D-erythrose 4-phosphate and phosphoenolpyruvate: step 3/7. Its function is as follows. Catalyzes a trans-dehydration via an enolate intermediate. This is 3-dehydroquinate dehydratase from Shewanella oneidensis (strain ATCC 700550 / JCM 31522 / CIP 106686 / LMG 19005 / NCIMB 14063 / MR-1).